Reading from the N-terminus, the 770-residue chain is Amyloid-beta precursor protein (770 aa).

A signal peptide spans 1–17 (MLPSLALLLLAAWTVRA). Topologically, residues 18–701 (LEVPTDGNAG…AEDVGSNKGA (684 aa)) are extracellular. Residues 28-123 (LLAEPQIAMF…PYRCLVGEFV (96 aa)) are GFLD subdomain. The E1 domain maps to 28-189 (LLAEPQIAMF…RGVEFVCCPL (162 aa)). Disulfide bonds link C38/C62, C73/C117, C98/C105, C133/C187, C144/C174, and C158/C186. 96–110 (NWCKRGRKQCKTHTH) contacts heparin. A cuBD subdomain region spans residues 131 to 189 (DKCKFLHQERMDVCETHLHWHTVAKETCSEKSTNLHDYGMLLPCGIDKFRGVEFVCCPL). The tract at residues 135–155 (FLHQERMDVCETHLHWHTVAK) is copper-binding. The Cu(2+) site is built by H147, H151, and Y168. A zinc-binding region spans residues 181 to 188 (GVEFVCCP). Residues E183, C186, and C187 each coordinate Zn(2+). Over residues 196 to 207 (IDSADAEEDDSD) the composition is skewed to acidic residues. A disordered region spans residues 196-283 (IDSADAEEDD…TTTTTTTESV (88 aa)). At S198 the chain carries Phosphoserine; by CK2. Position 206 is a phosphoserine; by CK1 (S206). A sulfotyrosine mark is found at Y217 and Y262. Residues 228–264 (VAEEEEVADVEEEEAEDDEDVEDGDEVEEEAEEPYEE) are compositionally biased toward acidic residues. The span at 268–281 (RTTSIATTTTTTTE) shows a compositional bias: low complexity. Disulfide bonds link C291–C341, C300–C324, and C316–C337. Positions 291-341 (CSEQAETGPCRAMISRWYFDVTEGKCAPFFYGGCGGNRNNFDTEEYCMAVC) constitute a BPTI/Kunitz inhibitor domain. Residue Y336 is modified to Sulfotyrosine. The OX-2 signature appears at 344–365 (VSSQSLLKTTSEPLPQDPVKLP). The E2 domain maps to 374–565 (AVDKYLETPG…EEIQDEVDEL (192 aa)). The heparin-binding stretch occupies residues 391–423 (FQKAKERLEAKHRERMSQVMREWEEAERQAKNL). A Phosphoserine modification is found at S441. Residues 491–522 (FNMLKKYVRAEQKDRQHTLKHFEHVRMVDPKK) are heparin-binding. Y497 is modified (phosphotyrosine). A collagen-binding region spans residues 523–540 (AAQIRSQVMTHLRVIYER). 2 N-linked (GlcNAc...) asparagine glycosylation sites follow: N542 and N571. O-linked (Xyl...) (chondroitin sulfate) serine; in L-APP isoforms glycosylation is present at S656. Cu(2+) is bound by residues H677 and H685. Positions 677 and 685 each coordinate Zn(2+). The interval 695–722 (VGSNKGAIIGLMVGGVVIATVIVITLVM) is interaction with PSEN1. The helical transmembrane segment at 702–722 (IIGLMVGGVVIATVIVITLVM) threads the bilayer. At 723–770 (LKKKQYTSIHHGVVEVDAAVTPEERHLSKMQQNGYENPTYKFFEQMQN) the chain is on the cytoplasmic side. The Basolateral sorting signal motif lies at 724 to 734 (KKKQYTSIHHG). Residue T729 is modified to Phosphothreonine. Phosphoserine; by APP-kinase I is present on S730. The segment at 732 to 751 (HHGVVEVDAAVTPEERHLSK) is interaction with G(o)-alpha. T743 is subject to Phosphothreonine; by CDK5 and MAPK10. Residues 756 to 770 (GYENPTYKFFEQMQN) form a required for the interaction with KIF5B and for anterograde transport in axons region. Y757 carries the phosphotyrosine; by ABL1 modification. The short motif at 757-762 (YENPTY) is the YENPXY motif; contains endocytosis signal element. A Glycyl lysine isopeptide (Lys-Gly) (interchain with G-Cter in ubiquitin) cross-link involves residue K763.

The protein belongs to the APP family. Binds, via its C-terminus, to the PID domain of several cytoplasmic proteins, including APBB family members, the APBA family, MAPK8IP1, SHC1 and NUMB and DAB1. Binding to DAB1 inhibits its serine phosphorylation. Interacts (via NPXY motif) with DAB2 (via PID domain); the interaction is impaired by tyrosine phosphorylation of the NPXY motif. Also interacts with GPCR-like protein BPP, APPBP1, IB1, KNS2 (via its TPR domains), APPBP2 (via BaSS) and DDB1. In vitro, it binds MAPT via the MT-binding domains. Associates with microtubules in the presence of ATP and in a kinesin-dependent manner. Interacts, through a C-terminal domain, with GNAO1. Amyloid-beta protein 42 binds CHRNA7 in hippocampal neurons. Amyloid-beta associates with HADH2. Interacts with CPEB1, ANKS1B and AGER. Interacts with ITM2B. Interacts with ITM2C. Interacts with IDE. Can form homodimers; dimerization is enhanced in the presence of Cu(2+) ions. Can form homodimers; this is promoted by heparin binding. Amyloid-beta protein 40 interacts with S100A9. CTF-alpha product of APP interacts with GSAP. Isoform APP695 interacts with SORL1 (via N-terminal ectodomain); this interaction retains APP in the trans-Golgi network and reduces processing into soluble APP-alpha and amyloid-beta peptides. The C99 fragment also interacts with SORL1. Isoform APP751 interacts with SORL1. Isoform APP770 interacts with SORL1. Interacts with PLD3. Interacts with VDAC1. Interacts with NSG1; could regulate APP processing. Amyloid-beta protein 42 interacts with FPR2. Interacts with SYT7. Interacts (via transmembrane region) with PSEN1; the interaction is direct. Interacts with LRRK2. Interacts (via cytoplasmic domain) with KIF5B. Interacts (via C-terminus) with APBB2/FE65L1 (via C-terminus). Interacts (via intracellular domain) with APBB3. In terms of processing, proteolytically processed under normal cellular conditions. Cleavage either by alpha-secretase, beta-secretase or theta-secretase leads to generation and extracellular release of soluble APP peptides, S-APP-alpha and S-APP-beta, and the retention of corresponding membrane-anchored C-terminal fragments, C80, C83 and C99. Subsequent processing of C80 and C83 by gamma-secretase yields P3 peptides. This is the major secretory pathway and is non-amyloidogenic. Alternatively, presenilin/nicastrin-mediated gamma-secretase processing of C99 releases the amyloid-beta proteins, amyloid-beta protein 40 and amyloid-beta protein 42, major components of amyloid plaques, and the cytotoxic C-terminal fragments, gamma-CTF(50), gamma-CTF(57) and gamma-CTF(59). PSEN1 cleavage is more efficient with C83 than with C99 as substrate (in vitro). Amyloid-beta protein 40 and Amyloid-beta protein 42 are cleaved by ACE. Many other minor amyloid-beta peptides, amyloid-beta 1-X peptides, are found in cerebral spinal fluid (CSF) including the amyloid-beta X-15 peptides, produced from the cleavage by alpha-secretase. Proteolytically cleaved by caspases during neuronal apoptosis. Cleavage at Asp-739 by either caspase-3, -8 or -9 results in the production of the neurotoxic C31 peptide and the increased production of amyloid-beta peptides. Post-translationally, N-glycosylated. In terms of processing, O-glycosylated. O-linkage of chondroitin sulfate to the L-APP isoforms produces the APP proteoglycan core proteins, the appicans. The chondroitin sulfate chain of appicans contains 4-O-sulfated galactose in the linkage region and chondroitin sulfate E in the repeated disaccharide region. Phosphorylation in the C-terminal on tyrosine, threonine and serine residues is neuron-specific. Phosphorylation can affect APP processing, neuronal differentiation and interaction with other proteins. Phosphorylated on Thr-743 in neuronal cells by Cdc5 kinase and Mapk10, in dividing cells by Cdc2 kinase in a cell-cycle dependent manner with maximal levels at the G2/M phase and, in vitro, by GSK-3-beta. The Thr-743 phosphorylated form causes a conformational change which reduces binding of Fe65 family members. In dopaminergic (DA) neurons, phosphorylation on Thr-743 by LRKK2 promotes the production and the nuclear translocation of the APP intracellular domain (AICD) which induces DA neuron apoptosis. Phosphorylation on Tyr-757 is required for SHC binding. Phosphorylated in the extracellular domain by casein kinases on both soluble and membrane-bound APP. This phosphorylation is inhibited by heparin. Post-translationally, extracellular binding and reduction of copper, results in a corresponding oxidation of Cys-144 and Cys-158, and the formation of a disulfide bond. In terms of processing, trophic-factor deprivation triggers the cleavage of surface APP by beta-secretase to release sAPP-beta which is further cleaved to release an N-terminal fragment of APP (N-APP). Amyloid-beta peptides are degraded by IDE. Post-translationally, sulfated on tyrosine residues. Expressed in the brain. In the brain, non-L-APP isoforms are expressed in neurons, isoform APP695 being the predominant form. In astrocytes and microglial cells, almost 50% is L-isoform (appican).

It localises to the cell membrane. It is found in the membrane. The protein resides in the perikaryon. Its subcellular location is the cell projection. The protein localises to the growth cone. It localises to the clathrin-coated pit. It is found in the early endosome. The protein resides in the cytoplasmic vesicle. Its subcellular location is the endoplasmic reticulum. The protein localises to the golgi apparatus. It localises to the cell surface. It is found in the nucleus. The protein resides in the cytoplasm. Its subcellular location is the secreted. Functionally, functions as a cell surface receptor and performs physiological functions on the surface of neurons relevant to neurite growth, neuronal adhesion and axonogenesis. Interaction between APP molecules on neighboring cells promotes synaptogenesis. Involved in cell mobility and transcription regulation through protein-protein interactions. Can promote transcription activation through binding to APBB1-KAT5 and inhibit Notch signaling through interaction with Numb. Couples to apoptosis-inducing pathways such as those mediated by G(o) and JIP. Inhibits G(o)-alpha ATPase activity. Acts as a kinesin I membrane receptor, mediating the axonal transport of beta-secretase and presenilin 1. By acting as a kinesin I membrane receptor, plays a role in axonal anterograde transport of cargo towards synapses in axons. May be involved in copper homeostasis/oxidative stress through copper ion reduction. Can regulate neurite outgrowth through binding to components of the extracellular matrix such as heparin and collagen I and IV. The splice isoforms that contain the BPTI domain possess protease inhibitor activity. Induces a AGER-dependent pathway that involves activation of p38 MAPK, resulting in internalization of amyloid-beta peptide and leading to mitochondrial dysfunction in cultured mitochondrial dysfunction in cultured cortical neurons. Provides Cu(2+) ions for GPC1 which are required for release of nitric oxide (NO) and subsequent degradation of the heparan sulfate chains on GPC1. In terms of biological role, amyloid-beta peptides are lipophilic metal chelators with metal-reducing activity. Binds transient metals such as copper, zinc and iron. Rat and mouse amyloid-beta peptides bind only weakly transient metals and have little reducing activity due to substitutions of transient metal chelating residues. Amyloid-beta protein 42 may activate mononuclear phagocytes in the brain and elicits inflammatory responses. Promotes both tau aggregation and TPK II-mediated phosphorylation. Also binds GPC1 in lipid rafts. Appicans elicit adhesion of neural cells to the extracellular matrix and may regulate neurite outgrowth in the brain. Its function is as follows. The gamma-CTF peptides as well as the caspase-cleaved peptides, including C31, are potent enhancers of neuronal apoptosis. The chain is Amyloid-beta precursor protein from Rattus norvegicus (Rat).